The chain runs to 306 residues: HTH-type transcriptional regulator AlkR (306 aa).

An HTH araC/xylS-type domain is found at 207-305 (SNALAAIHAY…EQSPKHYRQQ (99 aa)). 2 consecutive DNA-binding regions (H-T-H motif) follow at residues 224–245 (ESLADQCCMSRSKFATLFQSIV) and 272–295 (IQQIANKVGYSSETAFSQAFKRQF).

The protein operates within hydrocarbon metabolism; alkane degradation. In terms of biological role, this protein activates the expression of the alkane 1-monooxygenase AlkM. The sequence is that of HTH-type transcriptional regulator AlkR (alkR) from Acinetobacter baylyi (strain ATCC 33305 / BD413 / ADP1).